We begin with the raw amino-acid sequence, 587 residues long: Protein cereblon (587 aa).

Disordered stretches follow at residues 1-56 (MDEE…PAEY), 78-113 (DVLQ…GLPN), and 157-195 (FSQE…IDIG). 2 stretches are compositionally biased toward polar residues: residues 22-31 (EDQSQSQGLQ) and 86-96 (SEGSHPSSDMS). The span at 159-168 (QERRRSRTSE) shows a compositional bias: basic and acidic residues. Over residues 170-181 (TSQEEAAEEPDD) the composition is skewed to acidic residues. A compositionally biased stretch (pro residues) spans 182–191 (PPPQQPPLPP). The 227-residue stretch at 227–453 (HMLIFLHHHI…LIKSTFKDET (227 aa)) folds into the Lon N-terminal domain. The CULT domain occupies 452 to 561 (ETLFFCRYCN…LSGSSVRIGK (110 aa)). Zn(2+) is bound by residues C457, C460, C526, and C529.

This sequence belongs to the CRBN family. In terms of assembly, likely a component of a DCX (DDB1-CUL4-X-box) protein ligase complex. May interact with pic/DDB1. Post-translationally, ubiquitinated.

It localises to the nucleus. Its pathway is protein modification; protein ubiquitination. Functionally, substrate recognition component of a DCX (DDB1-CUL4-X-box) E3 protein ligase complex that mediates the ubiquitination and subsequent proteasomal degradation of target proteins. Has an essential role in mediating growth by negatively regulating insulin signaling. It also has a role in maintaining presynaptic function in the neuromuscular junction synapses of third-instar larvae. The chain is Protein cereblon from Drosophila simulans (Fruit fly).